The sequence spans 1254 residues: NPC intracellular cholesterol transporter 1 homolog 1b (1254 aa).

The N-terminal stretch at 1-16 is a signal peptide; that stretch reads MKVIFATIWLIAGAWS. Over 17-272 the chain is Extracellular; sequence QSAEQLGCIW…WKIAGLYGVT (256 aa). 8 disulfides stabilise this stretch: Cys24/Cys81, Cys62/Cys116, Cys82/Cys120, Cys104/Cys241, Cys107/Cys161, Cys178/Cys186, Cys231/Cys246, and Cys243/Cys250. N-linked (GlcNAc...) asparagine glycosylation is found at Asn123 and Asn132. The chain crosses the membrane as a helical span at residues 273-293; sequence FILALIIACALSFFIFWGAFG. Residues 294-325 lie on the Cytoplasmic side of the membrane; it reads KTSAPSVCMPTLFGEFFYHGFRIWGTFCAKHP. The helical transmembrane segment at 326 to 346 threads the bilayer; it reads VIVLALCSWAIAGLSFGIRYM. Residues 347 to 593 are Extracellular-facing; it reads TITTDPVELW…AIVELSEGEV (247 aa). N-linked (GlcNAc...) asparagine glycosylation is present at Asn389. A disulfide bond links Cys438 and Cys454. N-linked (GlcNAc...) asparagine glycosylation occurs at Asn479. A disulfide bridge links Cys491 with Cys500. Positions 592–757 constitute an SSD domain; sequence EVSTVVISYV…ITAFVALMAI (166 aa). A helical membrane pass occupies residues 594–614; that stretch reads STVVISYVVMFVYVAIALGHI. Residues 615–625 are Cytoplasmic-facing; sequence RSCRGFLRESR. Residues 626–646 form a helical membrane-spanning segment; it reads IMLAIGGIVIVLASVVCSLGF. Residues 647–657 are Extracellular-facing; the sequence is WGYLDVTTTML. The chain crosses the membrane as a helical span at residues 658–678; sequence AIEVIPFLVLAVGVDNIFIMV. Residues 679–736 are Cytoplasmic-facing; that stretch reads HTYQRLDHSKFKTTHEAIGEAIGQVGPSILQTAGSEMACFAIGCISDMPAVKTFAMYA. The chain crosses the membrane as a helical span at residues 737–757; sequence AIAILLDFLLQITAFVALMAI. The Extracellular segment spans residues 758-815; it reads DEKRYLDGRLDMLCCVKSGGKKINDEDGDGVDRPKEVGLLETLFKNFYSPFLLSKPVK. Residues 816–836 traverse the membrane as a helical segment; that stretch reads VSVLLIFTVITCLSLMVTPSI. The Cytoplasmic portion of the chain corresponds to 837–857; sequence EKGLDQEMSMPKNSHVVKYFR. Residues 858-878 traverse the membrane as a helical segment; the sequence is YMVDLLAMGAPVYWVLKPGLN. The Extracellular portion of the chain corresponds to 879–1079; that stretch reads YSEPLQQNLI…EQYLTIWGDA (201 aa). The cysteines at positions 889 and 894 are disulfide-linked. 2 N-linked (GlcNAc...) asparagine glycosylation sites follow: Asn896 and Asn939. 3 disulfides stabilise this stretch: Cys935/Cys990, Cys936/Cys958, and Cys946/Cys955. The chain crosses the membrane as a helical span at residues 1080 to 1100; that stretch reads MFSLGMSLVAIFLVTLLITGL. The Cytoplasmic portion of the chain corresponds to 1101-1105; that stretch reads DITST. A helical transmembrane segment spans residues 1106–1126; that stretch reads FIVLFMVICILINMLGMMWAW. Residues 1127–1132 are Extracellular-facing; the sequence is SINLNA. The helical transmembrane segment at 1133–1153 threads the bilayer; sequence ISLVNLVVCVGIGVEFVAHIV. The Cytoplasmic portion of the chain corresponds to 1154–1174; sequence RSFKRAEGTAQERARHSLNVT. The helical transmembrane segment at 1175–1195 threads the bilayer; sequence GSSVLSGITLTKFAGIVVLGF. The Extracellular segment spans residues 1196 to 1207; that stretch reads SNSQIFQVFYFR. Residues 1208–1228 traverse the membrane as a helical segment; that stretch reads MYLGIVLIGAAHGLILLPVLL. The Cytoplasmic portion of the chain corresponds to 1229–1254; the sequence is SLLGPPQKLARSSGAEPTASITITTN.

This sequence belongs to the patched family. Expressed in the midgut.

The protein localises to the cell membrane. The catalysed reaction is cholesterol(in) = cholesterol(out). Important for cholesterol absorption at the midgut epithelium. Acts only in the early steps of sterol absorption, prior to Npc1a-dependent intracellular sterol trafficking. In Drosophila melanogaster (Fruit fly), this protein is NPC intracellular cholesterol transporter 1 homolog 1b.